The sequence spans 342 residues: MTNGYIGSYTKKNGKGIYRFELNENQSRIDLLETGFELEASTYLLRNNEVLYGINKEGEQCGVASLKIDDNGELHLLNKCLSSKAGTGCYVSISEDKRYLFEAVYGAGIIRMYELNTHTGEIIRLIQELAHDFPTGTHERQDHPHAHYINQTPDGKYVAVTDLGADRIVTYKFDDNGFEFYKESLFKDSDGTRHIEFHDNGKFAYVVHELSNTVSVAEYNDGKFEELERHLTIPENFDGDTKLAAVRLSHDQQFLYVSNRGHDSIAIFKVLDNGQHLELVTITESGGQFPRDFNIASSDDLLVCAHEQGDSVVTVFERNKETGKITLCDNTRVASEGVCVIF.

It belongs to the cycloisomerase 2 family.

This is an uncharacterized protein from Staphylococcus aureus (strain MSSA476).